A 348-amino-acid chain; its full sequence is Rhodopsin (348 aa).

At M1 the chain carries N-acetylmethionine. The Extracellular segment spans residues 1–36; the sequence is MNGTEGPNFYVPFSNVTGVVRSPFEQPQYYLAEPWQ. 2 N-linked (GlcNAc...) asparagine glycosylation sites follow: N2 and N15. Residues 37-61 form a helical membrane-spanning segment; it reads FSMLAAYMFLLIVLGFPINFLTLYV. The Cytoplasmic portion of the chain corresponds to 62-73; it reads TVQHKKLRTPLN. A helical membrane pass occupies residues 74-96; it reads YILLNLAVADLFMVFGGFTTTLY. The Extracellular segment spans residues 97 to 110; that stretch reads TSLHGYFVFGPTGC. C110 and C187 form a disulfide bridge. The chain crosses the membrane as a helical span at residues 111–133; sequence NLEGFFATLGGEIALWSLVVLAI. Residues 134-136 carry the 'Ionic lock' involved in activated form stabilization motif; it reads ERY. Residues 134–152 are Cytoplasmic-facing; sequence ERYVVVCKPMSNFRFGENH. Residues 153 to 173 traverse the membrane as a helical segment; sequence AIMGVVFTWIMALACAAPPLV. Residues 174-202 lie on the Extracellular side of the membrane; the sequence is GWSRYIPEGMQCSCGIDYYTLKPEVNNES. Residue E201 coordinates Zn(2+). A helical transmembrane segment spans residues 203–224; it reads FVIYMFVVHFTIPMIVIFFCYG. Residues 225 to 252 lie on the Cytoplasmic side of the membrane; it reads QLVFTVKEAAAQQQESATTQKAEKEVTR. A helical membrane pass occupies residues 253–274; that stretch reads MVIIMVIFFLICWLPYASVAFY. Topologically, residues 275–286 are extracellular; that stretch reads IFTHQGSNFGPI. Position 279 (Q279) interacts with Zn(2+). The chain crosses the membrane as a helical span at residues 287–308; that stretch reads FMTLPAFFAKSSSIYNPVIYIM. Position 296 is an N6-(retinylidene)lysine (K296). The Cytoplasmic portion of the chain corresponds to 309–348; the sequence is LNKQFRNCMLTTLCCGKNPLGDDDASATASKTETSQVAPA. Residues C322 and C323 are each lipidated (S-palmitoyl cysteine). The interval 330–348 is interaction with SAG; that stretch reads DDDASATASKTETSQVAPA. Position 334 is a phosphoserine (S334). A Phosphothreonine modification is found at T336. S338 is subject to Phosphoserine. A phosphothreonine mark is found at T340 and T342. The residue at position 343 (S343) is a Phosphoserine.

It belongs to the G-protein coupled receptor 1 family. Opsin subfamily. As to quaternary structure, homodimer. May form a complex composed of RHO, GRK1 and RCVRN in a Ca(2+)-dependent manner; RCVRN prevents the interaction between GRK1 and RHO. Interacts with GRK1. Interacts (phosphorylated form) with SAG. Interacts with GNAT1. Interacts with GNAT3. SAG and G-proteins compete for a common binding site. Interacts with PRCD; the interaction promotes PRCD stability. Forms a complex with ASAP1 and ARF4. Forms a complex with ASAP1, RAB11A, Rabin8/RAB3IP, ARF4 and RAB11FIP3; the complex regulates Golgi-to-cilia rhodopsin/RHO transport in photoreceptors. Post-translationally, phosphorylated on some or all of the serine and threonine residues present in the C-terminal region. Contains one covalently linked retinal chromophore. Upon light absorption, the covalently bound 11-cis-retinal is converted to all-trans-retinal. After hydrolysis of the Schiff base and release of the covalently bound all-trans-retinal, active rhodopsin is regenerated by binding of a fresh molecule of 11-cis-retinal. In terms of tissue distribution, rod-shaped photoreceptor cells in the retina (at protein level).

The protein resides in the membrane. Its subcellular location is the cell projection. The protein localises to the cilium. It localises to the photoreceptor outer segment. Functionally, photoreceptor required for image-forming vision at low light intensity. Required for photoreceptor cell viability after birth. Light-induced isomerization of 11-cis to all-trans retinal triggers a conformational change that activates signaling via G-proteins. Subsequent receptor phosphorylation mediates displacement of the bound G-protein alpha subunit by the arrestin SAG and terminates signaling. The polypeptide is Rhodopsin (Rho) (Mus musculus (Mouse)).